A 249-amino-acid polypeptide reads, in one-letter code: Aquaporin TIP4-3 (249 aa).

The next 2 membrane-spanning stretches (helical) occupy residues 20–40 and 56–76; these read GVLG…GAAM and TAVA…GFHI. Residues 82–84 carry the NPA 1 motif; the sequence is NPA. The next 3 helical transmembrane spans lie at 100–122, 141–161, and 169–189; these read SSLY…RWLT, GVVA…ATIL, and GAGP…GAAL. The NPA 2 signature appears at 195–197; the sequence is NPA. A helical membrane pass occupies residues 214 to 234; it reads VYWVGPLAGGPLAVLVYECCF.

This sequence belongs to the MIP/aquaporin (TC 1.A.8) family. TIP (TC 1.A.8.10) subfamily.

It localises to the vacuole membrane. Its function is as follows. Aquaporins facilitate the transport of water and small neutral solutes across cell membranes. The chain is Aquaporin TIP4-3 (TIP4-3) from Zea mays (Maize).